We begin with the raw amino-acid sequence, 119 residues long: Large ribosomal subunit protein uL18 (119 aa).

It belongs to the universal ribosomal protein uL18 family. In terms of assembly, part of the 50S ribosomal subunit; part of the 5S rRNA/L5/L18/L25 subcomplex. Contacts the 5S and 23S rRNAs.

In terms of biological role, this is one of the proteins that bind and probably mediate the attachment of the 5S RNA into the large ribosomal subunit, where it forms part of the central protuberance. This Cupriavidus necator (strain ATCC 17699 / DSM 428 / KCTC 22496 / NCIMB 10442 / H16 / Stanier 337) (Ralstonia eutropha) protein is Large ribosomal subunit protein uL18.